A 233-amino-acid chain; its full sequence is uncharacterized protein (233 aa).

The interval 21–43 (RWRTATSADHPRRGRPAAQAVRR) is disordered.

This is an uncharacterized protein from Mycobacterium tuberculosis (strain CDC 1551 / Oshkosh).